The sequence spans 1466 residues: Collagen alpha-1(III) chain (1466 aa).

The first 23 residues, 1-23 (MMSFVQKGSWLLLALLHPTIILA), serve as a signal peptide directing secretion. The propeptide at 24–153 (QQEAVEGGCS…CPTGPQNYSP (130 aa)) is N-terminal propeptide. Residues 30–89 (GGCSHLGQSYADRDVWKPEPCQICVCDSGSVLCDDIICDDQELDCPNPEIPFGECCAVCP) enclose the VWFC domain. The segment at 95 to 1194 (PTRPPNGQGP…GPPGPPGAPG (1100 aa)) is disordered. The segment covering 99–108 (PNGQGPQGPK) has biased composition (low complexity). Polar residues predominate over residues 146-155 (TGPQNYSPQY). Positions 149 to 167 (QNYSPQYDSYDVKSGVAVG) are nonhelical region (N-terminal). Residues 168–1196 (GLAGYPGPAG…PGPPGAPGPC (1029 aa)) are triple-helical region. Residues P173, P179, P182, P185, P191, P194, P197, P203, P206, P215, P218, P236, P239, P245, P248, P257, and P260 each carry the 4-hydroxyproline modification. A compositionally biased stretch (pro residues) spans 175-185 (PAGPPGPPGPP). Positions 187-199 (TSGHPGSPGSPGY) are enriched in low complexity. The span at 229-241 (KDGESGRPGRPGE) shows a compositional bias: basic and acidic residues. The span at 251–260 (KGPAGIPGFP) shows a compositional bias: low complexity. At K263 the chain carries 5-hydroxylysine; alternate. K263 is a glycosylation site (O-linked (Gal...) hydroxylysine; alternate). Positions 266 to 277 (RGFDGRNGEKGE) are enriched in basic and acidic residues. The residue at position 281 (P281) is a 4-hydroxyproline. The residue at position 284 (K284) is a 5-hydroxylysine. 4-hydroxyproline is present on residues P290, P296, P305, P311, P314, P332, P335, P338, P344, P347, P359, P365, P371, P383, P386, P392, P404, P407, P416, P425, P434, P443, P455, P458, P470, P473, P479, P488, P500, P512, P524, P530, P533, P539, P542, P545, P551, P554, P563, P566, P575, P581, P590, P599, P602, P608, P620, P635, P644, P650, P656, P659, P661, P668, P671, P680, P686, P692, P701, P703, P713, P716, P722, P728, P737, P746, P749, P755, P770, P776, P785, P788, P797, P806, P812, P815, P821, P830, P839, P845, and P854. Positions 311 to 322 (PGLPGAAGARGN) are enriched in low complexity. Positions 355–380 (PAGSPGSNGAPGQRGEPGPQGHAGAQ) are enriched in low complexity. The span at 390–399 (GSPGGKGEMG) shows a compositional bias: gly residues. Residues 404–425 (PGAPGLMGARGPPGPAGANGAP) are compositionally biased toward low complexity. Positions 426-435 (GLRGGAGEPG) are enriched in gly residues. The segment covering 478 to 523 (LPGAAGERGAPGFRGPAGPNGIPGEKGPAGERGAPGPAGPRGAAGE) has biased composition (low complexity). Residues 528–549 (GVPGGPGMRGMPGSPGGPGSDG) are compositionally biased toward gly residues. Residues 642 to 651 (GLPGTGGPPG) are compositionally biased toward gly residues. Gly residues predominate over residues 669 to 678 (GAPGGKGDAG). Residues 679-692 (APGERGPPGLAGAP) show a composition bias toward low complexity. Residues 693-711 (GLRGGAGPPGPEGGKGAAG) show a composition bias toward gly residues. The span at 729–738 (GERGGLGSPG) shows a compositional bias: gly residues. Low complexity predominate over residues 787–796 (LPGIAGPRGS). The segment covering 823–835 (GKGERGAPGEKGE) has biased composition (basic and acidic residues). Positions 836 to 850 (GGPPGVAGPPGGSGP) are enriched in gly residues. Residue K860 is modified to 5-hydroxylysine. Positions 864-873 (GSPGGPGAAG) are enriched in gly residues. 4-hydroxyproline occurs at positions 866, 869, 875, 881, 884, 890, 892, 899, 905, 914, 917, 929, 935, 941, and 944. Residues 890–907 (PGPPGPSGSPGKDGPPGP) are compositionally biased toward pro residues. Low complexity predominate over residues 908–917 (AGNTGAPGSP). Residues 946-961 (PLGIAGITGARGLAGP) show a composition bias toward low complexity. A 4-hydroxyproline mark is found at P962, P965, and P971. The residue at position 977 (K977) is a 5-hydroxylysine. 4-hydroxyproline is present on residues P983, P995, P1001, P1010, P1016, P1022, P1028, P1040, P1043, P1046, P1049, P1052, P1076, and P1085. Positions 1046 to 1055 (PGHPGPPGPV) are enriched in pro residues. A compositionally biased stretch (low complexity) spans 1067 to 1085 (SGPAGPAGAPGPAGSRGAP). Position 1106 is a 5-hydroxylysine (K1106). P1112, P1115, P1118, P1121, P1133, P1148, P1157, P1163, P1178, P1181, P1184, P1187, P1190, and P1193 each carry 4-hydroxyproline. A compositionally biased stretch (low complexity) spans 1123–1133 (PAGQQGAIGSP). The span at 1181 to 1193 (PGQPGPPGPPGAP) shows a compositional bias: pro residues. Positions 1197 to 1205 (CGGVGAAAI) are nonhelical region (C-terminal). The propeptide at 1222-1466 (DEPMDFKINT…GVDVGPVCFL (245 aa)) is C-terminal propeptide. The Fibrillar collagen NC1 domain maps to 1232-1466 (DEIMTSLKSV…GVDVGPVCFL (235 aa)). 3 cysteine pairs are disulfide-bonded: C1262/C1294, C1302/C1464, and C1372/C1417. Residues D1280, N1282, Q1283, C1285, and D1288 each contribute to the Ca(2+) site.

This sequence belongs to the fibrillar collagen family. As to quaternary structure, trimers of identical alpha 1(III) chains. The chains are linked to each other by interchain disulfide bonds. Trimers are also cross-linked via hydroxylysines. Interacts with ADGRG1. In terms of processing, proline residues at the third position of the tripeptide repeating unit (G-X-Y) are hydroxylated in some or all of the chains. Post-translationally, O-linked glycan consists of a Glc-Gal disaccharide bound to the oxygen atom of a post-translationally added hydroxyl group.

It localises to the secreted. It is found in the extracellular space. The protein localises to the extracellular matrix. Its function is as follows. Collagen type III occurs in most soft connective tissues along with type I collagen. Involved in regulation of cortical development. Is the major ligand of ADGRG1 in the developing brain and binding to ADGRG1 inhibits neuronal migration and activates the RhoA pathway by coupling ADGRG1 to GNA13 and possibly GNA12. This chain is Collagen alpha-1(III) chain (COL3A1), found in Homo sapiens (Human).